The chain runs to 137 residues: Large ribosomal subunit protein uL16 (137 aa).

The protein belongs to the universal ribosomal protein uL16 family. Part of the 50S ribosomal subunit.

Binds 23S rRNA and is also seen to make contacts with the A and possibly P site tRNAs. In Francisella tularensis subsp. holarctica (strain FTNF002-00 / FTA), this protein is Large ribosomal subunit protein uL16.